Reading from the N-terminus, the 583-residue chain is Isocitrate dehydrogenase kinase/phosphatase (583 aa).

ATP-binding positions include 315–321 and Lys336; that span reads APGIRGM. Residue Asp371 is part of the active site.

The protein belongs to the AceK family.

The protein localises to the cytoplasm. The catalysed reaction is L-seryl-[isocitrate dehydrogenase] + ATP = O-phospho-L-seryl-[isocitrate dehydrogenase] + ADP + H(+). Functionally, bifunctional enzyme which can phosphorylate or dephosphorylate isocitrate dehydrogenase (IDH) on a specific serine residue. This is a regulatory mechanism which enables bacteria to bypass the Krebs cycle via the glyoxylate shunt in response to the source of carbon. When bacteria are grown on glucose, IDH is fully active and unphosphorylated, but when grown on acetate or ethanol, the activity of IDH declines drastically concomitant with its phosphorylation. The sequence is that of Isocitrate dehydrogenase kinase/phosphatase from Salmonella agona (strain SL483).